A 547-amino-acid chain; its full sequence is Phosphomethylpyrimidine synthase (547 aa).

Residues N150, M179, Y208, H244, 264–266, 305–308, and E344 each bind substrate; these read SRG and DGLR. H348 contacts Zn(2+). Y371 is a binding site for substrate. H412 is a binding site for Zn(2+). Positions 492, 495, and 500 each coordinate [4Fe-4S] cluster.

Belongs to the ThiC family. It depends on [4Fe-4S] cluster as a cofactor.

It catalyses the reaction 5-amino-1-(5-phospho-beta-D-ribosyl)imidazole + S-adenosyl-L-methionine = 4-amino-2-methyl-5-(phosphooxymethyl)pyrimidine + CO + 5'-deoxyadenosine + formate + L-methionine + 3 H(+). It participates in cofactor biosynthesis; thiamine diphosphate biosynthesis. Its function is as follows. Catalyzes the synthesis of the hydroxymethylpyrimidine phosphate (HMP-P) moiety of thiamine from aminoimidazole ribotide (AIR) in a radical S-adenosyl-L-methionine (SAM)-dependent reaction. This Nocardia farcinica (strain IFM 10152) protein is Phosphomethylpyrimidine synthase.